A 123-amino-acid chain; its full sequence is Small ribosomal subunit protein uS12 (123 aa).

The disordered stretch occupies residues 1–47 (MPTINQLVRKGRKKAEKKQSTPALKGGPQKRGVCTRVYTSTPKKPNS). A 3-methylthioaspartic acid modification is found at Asp89.

Belongs to the universal ribosomal protein uS12 family. In terms of assembly, part of the 30S ribosomal subunit. Contacts proteins S8 and S17. May interact with IF1 in the 30S initiation complex.

With S4 and S5 plays an important role in translational accuracy. Its function is as follows. Interacts with and stabilizes bases of the 16S rRNA that are involved in tRNA selection in the A site and with the mRNA backbone. Located at the interface of the 30S and 50S subunits, it traverses the body of the 30S subunit contacting proteins on the other side and probably holding the rRNA structure together. The combined cluster of proteins S8, S12 and S17 appears to hold together the shoulder and platform of the 30S subunit. The polypeptide is Small ribosomal subunit protein uS12 (Desulforapulum autotrophicum (strain ATCC 43914 / DSM 3382 / VKM B-1955 / HRM2) (Desulfobacterium autotrophicum)).